The sequence spans 696 residues: L-amino-acid oxidase (696 aa).

The propeptide occupies 1-130 (MKWSAAAGAA…IKMRRDLKAR (130 aa)). FAD is bound by residues Glu-207, Arg-215, 236-237 (MR), and Val-440. Arg-237 serves as a coordination point for substrate. A substrate-binding site is contributed by Tyr-564. Residues Glu-649 and 658–661 (IASA) contribute to the FAD site.

This sequence belongs to the flavin monoamine oxidase family. FAD serves as cofactor.

It carries out the reaction an L-alpha-amino acid + O2 + H2O = a 2-oxocarboxylate + H2O2 + NH4(+). The sequence is that of L-amino-acid oxidase (lox) from Neurospora crassa (strain ATCC 24698 / 74-OR23-1A / CBS 708.71 / DSM 1257 / FGSC 987).